The sequence spans 1298 residues: MKVVPEKNAVRILWGRERGARAMGAQRLLQELVEDKTRWMKWEGKRVELPDSPRSTFLLAFSPDRTLLASTHVNHNIYITEVKTGKCVHSLIGHRRTPWCVTFHPTISGLIASGCLDGEVRIWDLHGGSESWFTDSNNAIASLAFHPTAQLLLIATANEIHFWDWSRREPFAVVKTASEMERVRLVRFDPLGHYLLTAIVNPSNQQGDDEPEIPIDGTELSHYRQRALLQSQPVRRTPLLHNFLHMLSSRSSGIQVGEQSTVQDSATPSPPPPPPQPSTERPRTSAYIRLRQRVSYPTAECCQHLGILCLCSRCSGTRVPSLLPHQDSVPPASARATTPSFSFVQTEPFHPPEQASSTQQDQGLLNRPSAFSTVQSSTAGNTLRNLSLGPTRRSLGGPLSSHPSRYHREIAPGLTGSEWTRTVLSLNSRSEAESMPPPRTSASSVSLLSVLRQQEGGSQASVYTSATEGRGFPASGLATESDGGNGSSQNNSGSIRHELQCDLRRFFLEYDRLQELDQSLSGEAPQTQQAQEMLNNNIESERPGPSHQPTPHSSENNSNLSRGHLNRCRACHNLLTFNNDTLRWERTTPNYSSGEASSSWQVPSSFESVPSSGSQLPPLERTEGQTPSSSRLELSSSASPQEERTVGVAFNQETGHWERIYTQSSRSGTVSQEALHQDMPEESSEEDSLRRRLLESSLISLSRYDGAGSREHPIYPDPARLSPAAYYAQRMIQYLSRRDSIRQRSMRYQQNRLRSSTSSSSSDNQGPSVEGTDLEFEDFEDNGDRSRHRAPRNARMSAPSLGRFVPRRFLLPEYLPYAGIFHERGQPGLATHSSVNRVLAGAVIGDGQSAVASNIANTTYRLQWWDFTKFDLPEISNASVNVLVQNCKIYNDASCDISADGQLLAAFIPSSQRGFPDEGILAVYSLAPHNLGEMLYTKRFGPNAISVSLSPMGRYVMVGLASRRILLHPSTEHMVAQVFRLQQAHGGETSMRRVFNVLYPMPADQRRHVSINSARWLPEPGLGLAYGTNKGDLVICRPEALNSGVEYYWDQLNETVFTVHSNSRSSERPGTSRATWRTDRDMGLMNAIGLQPRNPATSVTSQGTQTLALQLQNAETQTEREVPEPGTAASGPGEGEGSEYGASGEDALSRIQRLMAEGGMTAVVQREQSTTMASMGGFGNNIIVSHRIHRSSQTGTEPGAAHTSSPQPSTSRGLLPEAGQLAERGLSPRTASWDQPGTPGREPTQPTLPSSSPVPIPVSLPSAEGPTLHCELTNNNHLLDGGSSRGDAAGPRGEPRNR.

Residues 1–22 form an interaction with DDB1 region; the sequence is MKVVPEKNAVRILWGRERGARA. Residue K45 forms a Glycyl lysine isopeptide (Lys-Gly) (interchain with G-Cter in ubiquitin) linkage. WD repeat units lie at residues 51–90, 93–133, and 135–175; these read DSPR…CVHS, GHRR…ESWF, and DSNN…AVVK. Residue S52 is modified to Phosphoserine; by MTOR. Residues 254–266 are compositionally biased toward polar residues; the sequence is IQVGEQSTVQDSA. The segment at 254 to 284 is disordered; that stretch reads IQVGEQSTVQDSATPSPPPPPPQPSTERPRT. Pro residues predominate over residues 268–277; the sequence is PSPPPPPPQP. A PxP motif 1 motif is present at residues 275–281; that stretch reads PQPSTER. Residue S328 is modified to Phosphoserine. The segment at 343-413 is disordered; it reads FVQTEPFHPP…SRYHREIAPG (71 aa). Polar residues predominate over residues 354 to 385; sequence QASSTQQDQGLLNRPSAFSTVQSSTAGNTLRN. Phosphoserine is present on residues S394 and S443. 3 stretches are compositionally biased toward polar residues: residues 458–467, 547–561, and 590–601; these read SQASVYTSAT, HQPT…SNLS, and NYSSGEASSSWQ. Disordered stretches follow at residues 458–494, 538–561, 590–690, and 747–796; these read SQAS…NSGS, IESE…SNLS, NYSS…DSLR, and RYQQ…NARM. Low complexity-rich tracts occupy residues 602–614 and 628–639; these read VPSS…SSGS and SSSRLELSSSAS. Residues S635 and S639 each carry the phosphoserine modification. A compositionally biased stretch (polar residues) spans 661–674; that stretch reads YTQSSRSGTVSQEA. R747 carries the post-translational modification Asymmetric dimethylarginine. Positions 772–781 are enriched in acidic residues; sequence TDLEFEDFED. Residue S1043 is modified to Phosphoserine; by IKKA. The LIR signature appears at 1043–1052; it reads SGVEYYWDQL. Polar residues predominate over residues 1060 to 1075; sequence HSNSRSSERPGTSRAT. The disordered stretch occupies residues 1060–1079; the sequence is HSNSRSSERPGTSRATWRTD. 2 consecutive short sequence motifs (TQT motif) follow at residues 1104–1106 and 1116–1118; these read TQT. Disordered regions lie at residues 1112–1143, 1190–1214, and 1227–1298; these read QNAE…YGAS, RSSQ…SRGL, and SPRT…PRNR. The segment covering 1191-1212 has biased composition (polar residues); sequence SSQTGTEPGAAHTSSPQPSTSR. S1205 bears the Phosphoserine mark. The short motif at 1206-1212 is the PxP motif 2 element; that stretch reads PQPSTSR.

The protein belongs to the WD repeat AMBRA1 family. In terms of assembly, component of the DCX(AMBRA1) E3 ubiquitin ligase complex, also named CRL4(AMBRA1), at least composed of CUL4 (CUL4A or CUL4B), DDB1, AMBRA1 and RBX1. Interacts with BECN1. Probably forms a complex with BECN1 and PIK3C3. Interacts with BECN2. Interacts with BCL2; leading to prevent interaction with BCN1 and autophagy, interaction is disrupted upon autophagy induction. Interacts with ULK1. Interacts (via PxP motifs) with PPP2CA; enhancing interaction between PPP2CA and MYC or FOXO3. Forms a complex with PPP2CA and BECN1; AMBRA1 and BECN1 components of the complex regulate MYC stability via different pathways. Interacts (TQT motifs) with DYNLL1 and DYNLL2; tethering AMBRA1 and the BECN1-PIK3C3 complex in absence of autophagy. Interacts with TRAF6; interaction is required to mediate 'Lys-63'-linked ubiquitination of ULK1. Interacts with TRIM32; promoting activation of ULK1 by TRIM32 via unanchored 'Lys-63'-linked polyubiquitin chains. Interacts with PRKN. Interacts (via LIR motif) with LC3 (MAP1LC3A, MAP1LC3B or MAP1LC3C). Interacts with HUWE1. Interacts with PTK2/FAK. Interacts with SRC; required for SRC trafficking to autophagosomes. Phosphorylation at Ser-52 by MTOR inhibits its ability to regulate autophagy and mediate ubiquitination of ULK1. Phosphorylation by ULK1 in response to autophagy induction abolishes interaction with DYNLL1 and DYNLL2, releasing AMBRA1 from the cytoskeletal docking site to induce autophagosome nucleation. Phosphorylation by MTOR inhibits interaction with PPP2CA and subsequent dephosphorylation of MYC. Phosphorylation at Ser-1043 by CHUK/IKKA promotes its interaction with ATG8 family proteins GABARAP and MAP1LC3B and its mitophagic activity. In terms of processing, ubiquitinated by RNF2 via 'Lys-48'-linkage in unstressed cells, leading to its degradation by the proteasome. Induction of autophagy promotes stabilization via interaction with CUL4 (CUL4A or CUL4B) and DDB1. Upon prolonged starvation, ubiquitinated and degraded, terminating the autophagy response. Post-translationally, undergoes proteolytic processing by caspase-6 (CASP6), caspase-7 (CASP7) and caspase-8 (CASP8) during apoptosis, resulting in the dismantling of the autophagic machinery and the accomplishment of the programmed cell death program. Also cleaved by calpains during apoptosis, which mediate a complete proteolytic degradation.

It is found in the endoplasmic reticulum. Its subcellular location is the cytoplasm. The protein localises to the cytoskeleton. The protein resides in the cytoplasmic vesicle. It localises to the autophagosome. It is found in the mitochondrion. Its subcellular location is the cytosol. The protein localises to the nucleus. The protein resides in the cell junction. It localises to the focal adhesion. The protein operates within protein modification; protein ubiquitination. Its function is as follows. Substrate-recognition component of a DCX (DDB1-CUL4-X-box) E3 ubiquitin-protein ligase complex involved in cell cycle control and autophagy. The DCX(AMBRA1) complex specifically mediates the polyubiquitination of target proteins such as BECN1, CCND1, CCND2, CCND3, ELOC and ULK1. Acts as an upstream master regulator of the transition from G1 to S cell phase: AMBRA1 specifically recognizes and binds phosphorylated cyclin-D (CCND1, CCND2 and CCND3), leading to cyclin-D ubiquitination by the DCX(AMBRA1) complex and subsequent degradation. By controlling the transition from G1 to S phase and cyclin-D degradation, AMBRA1 acts as a tumor suppressor that promotes genomic integrity during DNA replication and counteracts developmental abnormalities and tumor growth. AMBRA1 also regulates the cell cycle by promoting MYC dephosphorylation and degradation independently of the DCX(AMBRA1) complex: acts via interaction with the catalytic subunit of protein phosphatase 2A (PPP2CA), which enhances interaction between PPP2CA and MYC, leading to MYC dephosphorylation and degradation. Acts as a regulator of Cul5-RING (CRL5) E3 ubiquitin-protein ligase complexes by mediating ubiquitination and degradation of Elongin-C (ELOC) component of CRL5 complexes. Acts as a key regulator of autophagy by modulating the BECN1-PIK3C3 complex: controls protein turnover during neuronal development, and regulates normal cell survival and proliferation. In normal conditions, AMBRA1 is tethered to the cytoskeleton via interaction with dyneins DYNLL1 and DYNLL2. Upon autophagy induction, AMBRA1 is released from the cytoskeletal docking site to induce autophagosome nucleation by mediating ubiquitination of proteins involved in autophagy. The DCX(AMBRA1) complex mediates 'Lys-63'-linked ubiquitination of BECN1, increasing the association between BECN1 and PIK3C3 to promote PIK3C3 activity. In collaboration with TRAF6, AMBRA1 mediates 'Lys-63'-linked ubiquitination of ULK1 following autophagy induction, promoting ULK1 stability and kinase activity. Also activates ULK1 via interaction with TRIM32: TRIM32 stimulates ULK1 through unanchored 'Lys-63'-linked polyubiquitin chains. Also acts as an activator of mitophagy via interaction with PRKN and LC3 proteins (MAP1LC3A, MAP1LC3B or MAP1LC3C); possibly by bringing damaged mitochondria onto autophagosomes. Also activates mitophagy by acting as a cofactor for HUWE1; acts by promoting HUWE1-mediated ubiquitination of MFN2. AMBRA1 is also involved in regulatory T-cells (Treg) differentiation by promoting FOXO3 dephosphorylation independently of the DCX(AMBRA1) complex: acts via interaction with PPP2CA, which enhances interaction between PPP2CA and FOXO3, leading to FOXO3 dephosphorylation and stabilization. May act as a regulator of intracellular trafficking, regulating the localization of active PTK2/FAK and SRC. Also involved in transcription regulation by acting as a scaffold for protein complexes at chromatin. The polypeptide is Activating molecule in BECN1-regulated autophagy protein 1 (Homo sapiens (Human)).